The sequence spans 570 residues: Sulfite reductase [NADPH] hemoprotein beta-component (570 aa).

Positions 434, 440, 479, and 483 each coordinate [4Fe-4S] cluster. Cys483 is a binding site for siroheme.

Belongs to the nitrite and sulfite reductase 4Fe-4S domain family. Alpha(8)-beta(8). The alpha component is a flavoprotein, the beta component is a hemoprotein. The cofactor is siroheme. It depends on [4Fe-4S] cluster as a cofactor.

It carries out the reaction hydrogen sulfide + 3 NADP(+) + 3 H2O = sulfite + 3 NADPH + 4 H(+). It functions in the pathway sulfur metabolism; hydrogen sulfide biosynthesis; hydrogen sulfide from sulfite (NADPH route): step 1/1. Component of the sulfite reductase complex that catalyzes the 6-electron reduction of sulfite to sulfide. This is one of several activities required for the biosynthesis of L-cysteine from sulfate. The sequence is that of Sulfite reductase [NADPH] hemoprotein beta-component from Shigella sonnei (strain Ss046).